A 391-amino-acid polypeptide reads, in one-letter code: S-adenosylmethionine synthase (391 aa).

His-14 contributes to the ATP binding site. Residue Asp-16 coordinates Mg(2+). Glu-42 contributes to the K(+) binding site. Glu-55 and Gln-98 together coordinate L-methionine. The flexible loop stretch occupies residues Gln-98 to Glu-108. Residues Asp-172–Lys-174, Arg-238–Phe-239, Asp-247, Arg-253–Lys-254, Ala-270, and Lys-274 each bind ATP. Asp-247 is an L-methionine binding site. Lys-278 contributes to the L-methionine binding site.

Belongs to the AdoMet synthase family. In terms of assembly, homotetramer; dimer of dimers. Mg(2+) serves as cofactor. K(+) is required as a cofactor.

It localises to the cytoplasm. The enzyme catalyses L-methionine + ATP + H2O = S-adenosyl-L-methionine + phosphate + diphosphate. It functions in the pathway amino-acid biosynthesis; S-adenosyl-L-methionine biosynthesis; S-adenosyl-L-methionine from L-methionine: step 1/1. Its function is as follows. Catalyzes the formation of S-adenosylmethionine (AdoMet) from methionine and ATP. The overall synthetic reaction is composed of two sequential steps, AdoMet formation and the subsequent tripolyphosphate hydrolysis which occurs prior to release of AdoMet from the enzyme. The polypeptide is S-adenosylmethionine synthase (Clostridium botulinum (strain Okra / Type B1)).